The chain runs to 397 residues: Troponin T, skeletal muscle (397 aa).

The segment covering 1–16 (MSDDEEYTSSEEEEVV) has biased composition (acidic residues). 3 disordered regions span residues 1-148 (MSDD…NFTI), 234-261 (ERQK…YPPK), and 294-397 (DSNE…EEEE). Composition is skewed to basic and acidic residues over residues 37–77 (EFIK…LKEK), 84–129 (TRAE…EKKR), and 136–148 (MKDK…NFTI). Composition is skewed to basic and acidic residues over residues 294-307 (DSNE…KEQY) and 319-329 (FGERPGKKAGE). Residues 331-397 (ETPEGEEDAK…EEEEEEEEEE (67 aa)) are compositionally biased toward acidic residues.

The protein belongs to the troponin T family. Some glutamate residues are polyglycylated by TTLL3B. This modification occurs exclusively on glutamate residues and results in polyglycine chains on the gamma-carboxyl group. In terms of tissue distribution, isoform 3 is expressed in the hypoderm. Isoform 8 is expressed in the dorsal vessel. Isoform 6 is expressed in adult TDT muscle and isoform 9 in adult IFM, flight and jump muscles.

Its function is as follows. Troponin T is the tropomyosin-binding subunit of troponin, the thin filament regulatory complex which confers calcium-sensitivity to striated muscle actomyosin ATPase activity. The polypeptide is Troponin T, skeletal muscle (up) (Drosophila melanogaster (Fruit fly)).